Consider the following 343-residue polypeptide: Phosphoribosylformylglycinamidine cyclo-ligase (343 aa).

This sequence belongs to the AIR synthase family.

Its subcellular location is the cytoplasm. It catalyses the reaction 2-formamido-N(1)-(5-O-phospho-beta-D-ribosyl)acetamidine + ATP = 5-amino-1-(5-phospho-beta-D-ribosyl)imidazole + ADP + phosphate + H(+). Its pathway is purine metabolism; IMP biosynthesis via de novo pathway; 5-amino-1-(5-phospho-D-ribosyl)imidazole from N(2)-formyl-N(1)-(5-phospho-D-ribosyl)glycinamide: step 2/2. The chain is Phosphoribosylformylglycinamidine cyclo-ligase from Rippkaea orientalis (strain PCC 8801 / RF-1) (Cyanothece sp. (strain PCC 8801)).